Reading from the N-terminus, the 164-residue chain is Thiol peroxidase (164 aa).

Residues 18-163 (INEGDFAPDF…FDAALAAYKN (146 aa)) form the Thioredoxin domain. Cysteine 60 (cysteine sulfenic acid (-SOH) intermediate) is an active-site residue. Cysteine 60 and cysteine 93 are oxidised to a cystine.

Belongs to the peroxiredoxin family. Tpx subfamily. In terms of assembly, homodimer.

It catalyses the reaction a hydroperoxide + [thioredoxin]-dithiol = an alcohol + [thioredoxin]-disulfide + H2O. Functionally, thiol-specific peroxidase that catalyzes the reduction of hydrogen peroxide and organic hydroperoxides to water and alcohols, respectively. Plays a role in cell protection against oxidative stress by detoxifying peroxides. This is Thiol peroxidase from Staphylococcus aureus (strain MRSA252).